A 73-amino-acid chain; its full sequence is Heterin-2 (73 aa).

Positions 1–22 (MQYKTFLVIFLAYLLVTEEALA) are cleaved as a signal peptide. A propeptide spanning residues 47–73 (KRALKNIFDPYQKNLDLELERLLSQLQ) is cleaved from the precursor.

The protein belongs to the non-disulfide-bridged peptide (NDBP) superfamily. Medium-length antimicrobial peptide (group 3) family. As to expression, expressed by the venom gland.

It is found in the secreted. The protein localises to the target cell membrane. Its function is as follows. Amphipathic peptide with potent activities against Gram-positive bacteria (MIC=5.6-30.0 uM) and weaker activities against the tested Gram-negative bacteria (MIC=15 uM to &gt;45 uM). It has high hemolytic activity against human erythrocytes. May act by disrupting the integrity of the bacterial cell membrane. In Heterometrus spinifer (Asia giant forest scorpion), this protein is Heterin-2.